Here is a 103-residue protein sequence, read N- to C-terminus: G0/G1 switch protein 2 (103 aa).

Residues 80 to 103 (LQEKGKQQDTVLGGRALSNRQHAS) are disordered.

In terms of assembly, directly interacts with BCL2; this interaction prevents the formation of the anti-apoptotic BAX-BCL2 complex. Widely expressed with highest levels in peripheral blood, skeletal muscle and heart, followed by kidney and liver.

The protein localises to the mitochondrion. In terms of biological role, promotes apoptosis by binding to BCL2, hence preventing the formation of protective BCL2-BAX heterodimers. The sequence is that of G0/G1 switch protein 2 (G0S2) from Homo sapiens (Human).